A 384-amino-acid chain; its full sequence is GDSL esterase/lipase At1g28670 (384 aa).

The N-terminal stretch at 1–24 (MASSLKKLISSFLLVLYSTTIIVA) is a signal peptide. Ser42 acts as the Nucleophile in catalysis. Residues Asn105, Asn138, and Asn321 are each glycosylated (N-linked (GlcNAc...) asparagine). Active-site residues include Asp346 and His349.

This sequence belongs to the 'GDSL' lipolytic enzyme family.

It is found in the secreted. This Arabidopsis thaliana (Mouse-ear cress) protein is GDSL esterase/lipase At1g28670.